The chain runs to 199 residues: GTP cyclohydrolase-2 (199 aa).

Position 52–56 (52–56 (RMHSE)) interacts with GTP. Zn(2+) is bound by residues C57, C68, and C70. GTP is bound by residues Q73, 94-96 (EGR), and T116. D128 functions as the Proton acceptor in the catalytic mechanism. R130 (nucleophile) is an active-site residue. Positions 151 and 156 each coordinate GTP.

The protein belongs to the GTP cyclohydrolase II family. It depends on Zn(2+) as a cofactor.

The catalysed reaction is GTP + 4 H2O = 2,5-diamino-6-hydroxy-4-(5-phosphoribosylamino)-pyrimidine + formate + 2 phosphate + 3 H(+). It functions in the pathway cofactor biosynthesis; riboflavin biosynthesis; 5-amino-6-(D-ribitylamino)uracil from GTP: step 1/4. Functionally, catalyzes the conversion of GTP to 2,5-diamino-6-ribosylamino-4(3H)-pyrimidinone 5'-phosphate (DARP), formate and pyrophosphate. The polypeptide is GTP cyclohydrolase-2 (Aliivibrio fischeri (strain ATCC 700601 / ES114) (Vibrio fischeri)).